The primary structure comprises 134 residues: uncharacterized protein (134 aa).

This is an uncharacterized protein from Ictaluridae (bullhead catfishes).